The following is a 164-amino-acid chain: DNA-binding protein inhibitor ID-1 (164 aa).

Positions 46 to 98 constitute a bHLH domain; sequence LPALLDEQQVNVLLYDMNGCYSRLKELVPTLPQNRKVSKVEILQHVIDYIRDL. The short motif at 91-104 is the Nuclear export signal element; it reads VIDYIRDLQLELNS.

Heterodimer with other HLH proteins. Interacts with COPS5, IFI204, GATA4, NKX2-5, CLOCK and BMAL1. Isoform Short can form homodimers. In terms of processing, phosphorylated in vitro by PKA and PKC.

It localises to the cytoplasm. It is found in the nucleus. Transcriptional regulator (lacking a basic DNA binding domain) which negatively regulates the basic helix-loop-helix (bHLH) transcription factors by forming heterodimers and inhibiting their DNA binding and transcriptional activity. Implicated in regulating a variety of cellular processes, including cellular growth, senescence, differentiation, apoptosis, angiogenesis, and neoplastic transformation. Inhibits skeletal muscle and cardiac myocyte differentiation. Regulates the circadian clock by repressing the transcriptional activator activity of the CLOCK-BMAL1 heterodimer. The protein is DNA-binding protein inhibitor ID-1 (Id1) of Rattus norvegicus (Rat).